The following is a 149-amino-acid chain: Large ribosomal subunit protein uL13 (149 aa).

The protein belongs to the universal ribosomal protein uL13 family. Part of the 50S ribosomal subunit.

In terms of biological role, this protein is one of the early assembly proteins of the 50S ribosomal subunit, although it is not seen to bind rRNA by itself. It is important during the early stages of 50S assembly. This chain is Large ribosomal subunit protein uL13, found in Chlorobium phaeovibrioides (strain DSM 265 / 1930) (Prosthecochloris vibrioformis (strain DSM 265)).